We begin with the raw amino-acid sequence, 637 residues long: Mitochondrial Rho GTPase 1 (637 aa).

At 1-613 (MSDGETLADV…LRRVFYLSDS (613 aa)) the chain is on the cytoplasmic side. Residues 7 to 184 (LADVRIVLIG…FYYAQKAVIY (178 aa)) enclose the Miro 1 domain. GTP contacts are provided by residues 28–35 (SLLEDEWV), 74–78 (ISEMR), and 135–138 (LPSG). 2 consecutive EF-hand domains span residues 200–235 (RAKK…CFGI) and 320–355 (EGVQ…CSAP). Residues D213, D215, D217, Y219, E224, D333, D335, D337, C339, and E344 each coordinate Ca(2+). Positions 436 to 601 (RKVFQCLVVG…FEQLAMMAVY (166 aa)) constitute a Miro 2 domain. GTP is bound by residues 445–452 (GAKDAGKT), 482–486 (KVKEE), and 549–552 (TKVE). Residues 614-634 (NLLSKITFGAAIVALAGFLVL) traverse the membrane as a helical; Anchor for type IV membrane protein segment. Topologically, residues 635 to 637 (KNL) are mitochondrial intermembrane.

This sequence belongs to the mitochondrial Rho GTPase family.

It localises to the mitochondrion outer membrane. Functionally, mitochondrial GTPase involved in mitochondrial trafficking. Probably involved in control of anterograde transport of mitochondria and their subcellular distribution. This Caenorhabditis briggsae protein is Mitochondrial Rho GTPase 1.